We begin with the raw amino-acid sequence, 410 residues long: Multidrug resistance protein MdtM (410 aa).

Residues 1–11 (MPRFFTRHAAT) lie on the Cytoplasmic side of the membrane. Residues 12–32 (LFFPMALILYDFAAYLSTDLI) traverse the membrane as a helical segment. Topologically, residues 33–48 (QPGIINVVRDFNADVS) are periplasmic. The chain crosses the membrane as a helical span at residues 49–69 (LAPAAVSLYLAGGMALQWLLG). The Cytoplasmic portion of the chain corresponds to 70-78 (PLSDRIGRR). The helical transmembrane segment at 79–99 (PVLITGALIFTLACAATMFTT) threads the bilayer. Residues 100-103 (SMTQ) are Periplasmic-facing. The chain crosses the membrane as a helical span at residues 104-124 (FLIARAIQGTSICFIATVGYV). Residues 125–140 (TVQEAFGQTKGIKLMA) lie on the Cytoplasmic side of the membrane. A helical transmembrane segment spans residues 141–161 (IITSIVLIAPIIGPLSGAALM). Residues 162–167 (HFMHWK) are Periplasmic-facing. A helical transmembrane segment spans residues 168–188 (VLFAIIAVMGFISFVGLLLAM). The Cytoplasmic segment spans residues 189 to 216 (PETVKRGAVPFSAKSVLRDFRNVFCNRL). A helical membrane pass occupies residues 217 to 237 (FLFGAATISLSYIPMMSWVAV). The Periplasmic portion of the chain corresponds to 238-251 (SPVILIDAGSLTTS). The chain crosses the membrane as a helical span at residues 252 to 272 (QFAWTQVPVFGAVIVANAIVA). At 273–282 (RFVKDPTEPR) the chain is on the cytoplasmic side. The chain crosses the membrane as a helical span at residues 283–303 (FIWRAVPIQLVGLSLLIVGNL). Topologically, residues 304 to 307 (LSPH) are periplasmic. A helical membrane pass occupies residues 308 to 328 (VWLWSVLGTSLYAFGIGLIFP). The Cytoplasmic segment spans residues 329-348 (TLFRFTLFSNKLPKGTVSAS). A helical membrane pass occupies residues 349–369 (LNMVILMVMSVSVEIGRWLWF). Topologically, residues 370–373 (NGGR) are periplasmic. The helical transmembrane segment at 374 to 394 (LPFHLLAVVAGVIVVFTLAGL) threads the bilayer. Residues 395–410 (LNRVRQHQAAELVEEQ) are Cytoplasmic-facing.

The protein belongs to the major facilitator superfamily. Monomer.

The protein localises to the cell inner membrane. It catalyses the reaction Na(+)(in) + 2 H(+)(out) = Na(+)(out) + 2 H(+)(in). The catalysed reaction is K(+)(in) + H(+)(out) = K(+)(out) + H(+)(in). Efflux is inhibited by the ionophore carbonyl cyanide 3-chlorophenylhydrazone (CCCP). Functionally, proton-dependent efflux pump. Confers resistance to a broad spectrum of chemically unrelated substrates. Overexpression confers resistance to acriflavine, chloramphenicol, norfloxacin, ethidium bromide and tetraphenylphosphonium bromide (TPP). Can also export a broad range of quaternary ammonium compounds (QACs) and contribute to the intrinsic resistance of E.coli to these antimicrobial compounds. In addition to its role in multidrug resistance, MdtM likely plays a physiological role in alkaline pH homeostasis and in resistance to bile salts. May function in alkaline pH homeostasis when millimolar concentrations of sodium or potassium are present in the growth medium. When overexpressed, can confer a tolerance to alkaline pH values up to 9.75. Probably acts as a low-affinity antiporter that catalyzes the exchange of internal Na(+) and K(+) cations for extracellular protons to maintain a stable internal pH, acid relative to outside, during exposure to alkaline environments. Can also catalyze Rb(+)/H(+) and Li(+)/H(+) antiport, but not Ca(2+)/H(+) exchange. The exact stoichiometry of antiport is unknown. Finally, it could contribute to bile salt resistance by catalyzing the transport of bile salts out of the cell cytoplasm. Mediates a bile salt/H(+) exchange driven by the electrochemical gradient. Binds to cholate and deoxycholate with micromolar affinity and catalyzes both cholate/H(+) and deoxycholate/H(+) exchange reactions. The sequence is that of Multidrug resistance protein MdtM from Escherichia coli (strain K12).